We begin with the raw amino-acid sequence, 334 residues long: Glycerol-3-phosphate dehydrogenase [NAD(P)+] (334 aa).

The NADPH site is built by Y14 and K108. Residues K108, G140, and S142 each contribute to the sn-glycerol 3-phosphate site. A144 contacts NADPH. Sn-glycerol 3-phosphate is bound by residues K195, D248, S258, R259, and N260. Residue K195 is the Proton acceptor of the active site. Residue R259 coordinates NADPH. E285 is an NADPH binding site.

The protein belongs to the NAD-dependent glycerol-3-phosphate dehydrogenase family.

Its subcellular location is the cytoplasm. The catalysed reaction is sn-glycerol 3-phosphate + NAD(+) = dihydroxyacetone phosphate + NADH + H(+). It carries out the reaction sn-glycerol 3-phosphate + NADP(+) = dihydroxyacetone phosphate + NADPH + H(+). It participates in membrane lipid metabolism; glycerophospholipid metabolism. In terms of biological role, catalyzes the reduction of the glycolytic intermediate dihydroxyacetone phosphate (DHAP) to sn-glycerol 3-phosphate (G3P), the key precursor for phospholipid synthesis. The chain is Glycerol-3-phosphate dehydrogenase [NAD(P)+] from Mesoplasma florum (strain ATCC 33453 / NBRC 100688 / NCTC 11704 / L1) (Acholeplasma florum).